An 85-amino-acid chain; its full sequence is Large ribosomal subunit protein bL27 (85 aa).

The tract at residues 1–20 is disordered; that stretch reads MATKKAGGSTRNGRDSEAKR.

This sequence belongs to the bacterial ribosomal protein bL27 family.

This Pasteurella multocida (strain Pm70) protein is Large ribosomal subunit protein bL27.